The chain runs to 466 residues: Light-independent protochlorophyllide reductase subunit N (466 aa).

[4Fe-4S] cluster-binding residues include Cys24, Cys49, and Cys109.

This sequence belongs to the BchN/ChlN family. Protochlorophyllide reductase is composed of three subunits; ChlL, ChlN and ChlB. Forms a heterotetramer of two ChlB and two ChlN subunits. [4Fe-4S] cluster is required as a cofactor.

The enzyme catalyses chlorophyllide a + oxidized 2[4Fe-4S]-[ferredoxin] + 2 ADP + 2 phosphate = protochlorophyllide a + reduced 2[4Fe-4S]-[ferredoxin] + 2 ATP + 2 H2O. It functions in the pathway porphyrin-containing compound metabolism; chlorophyll biosynthesis (light-independent). In terms of biological role, component of the dark-operative protochlorophyllide reductase (DPOR) that uses Mg-ATP and reduced ferredoxin to reduce ring D of protochlorophyllide (Pchlide) to form chlorophyllide a (Chlide). This reaction is light-independent. The NB-protein (ChlN-ChlB) is the catalytic component of the complex. The chain is Light-independent protochlorophyllide reductase subunit N from Synechococcus sp. (strain JA-3-3Ab) (Cyanobacteria bacterium Yellowstone A-Prime).